Here is a 59-residue protein sequence, read N- to C-terminus: UPF0434 protein HDEF_0234 (59 aa).

This sequence belongs to the UPF0434 family.

This Hamiltonella defensa subsp. Acyrthosiphon pisum (strain 5AT) protein is UPF0434 protein HDEF_0234.